The sequence spans 352 residues: Isoflavone-7-O-methyltransferase 9 (352 aa).

Substrate is bound at residue 118-127; it reads VLDPTLSGSY. Gly196, Asp219, Asp239, Met240, and Lys253 together coordinate S-adenosyl-L-methionine. Catalysis depends on His257, which acts as the Proton acceptor.

It belongs to the class I-like SAM-binding methyltransferase superfamily. Cation-independent O-methyltransferase family. COMT subfamily. Homodimer.

It carries out the reaction a 7-hydroxyisoflavone + S-adenosyl-L-methionine = a 7-methoxyisoflavone + S-adenosyl-L-homocysteine + H(+). It participates in phytoalexin biosynthesis; medicarpin biosynthesis. In terms of biological role, transfers a methyl group to 7-hydroxyls of the isoflavones daidzein, genistein and 6,7,4'-trihydroxyisoflavone. Can also methylate (+)6a-hydroxymaackiain with lower efficiency. The protein is Isoflavone-7-O-methyltransferase 9 of Medicago sativa (Alfalfa).